Reading from the N-terminus, the 207-residue chain is MSYSGERDQFAPNMALVPMVVEQTSRGERSYDIFSRLLKERIIFLTGQVEDHMANLITAQMLFLEAENPEKDIFLYINSPGGVITAGMSIYDTMQFIKPDVSTICMGQACSMGAFLLTAGAKGKRFCLPNSRVMIHQPLGGFQGQATDIEIHAKEILKVKSRMNELMAKHTGKSLEEIERDTERDRFLSADEAVEYGLVDSVFTRRD.

The active-site Nucleophile is Ser111. His136 is an active-site residue.

The protein belongs to the peptidase S14 family. As to quaternary structure, fourteen ClpP subunits assemble into 2 heptameric rings which stack back to back to give a disk-like structure with a central cavity, resembling the structure of eukaryotic proteasomes.

It localises to the cytoplasm. The catalysed reaction is Hydrolysis of proteins to small peptides in the presence of ATP and magnesium. alpha-casein is the usual test substrate. In the absence of ATP, only oligopeptides shorter than five residues are hydrolyzed (such as succinyl-Leu-Tyr-|-NHMec, and Leu-Tyr-Leu-|-Tyr-Trp, in which cleavage of the -Tyr-|-Leu- and -Tyr-|-Trp bonds also occurs).. In terms of biological role, cleaves peptides in various proteins in a process that requires ATP hydrolysis. Has a chymotrypsin-like activity. Plays a major role in the degradation of misfolded proteins. The polypeptide is ATP-dependent Clp protease proteolytic subunit (Yersinia enterocolitica serotype O:8 / biotype 1B (strain NCTC 13174 / 8081)).